The following is a 269-amino-acid chain: 5'-nucleotidase SurE (269 aa).

The a divalent metal cation site is built by aspartate 11, aspartate 12, serine 43, and asparagine 101.

It belongs to the SurE nucleotidase family. It depends on a divalent metal cation as a cofactor.

Its subcellular location is the cytoplasm. The enzyme catalyses a ribonucleoside 5'-phosphate + H2O = a ribonucleoside + phosphate. Functionally, nucleotidase that shows phosphatase activity on nucleoside 5'-monophosphates. The sequence is that of 5'-nucleotidase SurE from Synechococcus sp. (strain CC9902).